The chain runs to 1165 residues: Error-prone DNA polymerase (1165 aa).

The tract at residues 1111-1165 (SEGLARPPLPTGADLYEPLTYEPLNGDRRDNPDAPAQRLRHPRDVRILPPSRDFH) is disordered. Basic and acidic residues predominate over residues 1152–1165 (PRDVRILPPSRDFH).

It belongs to the DNA polymerase type-C family. DnaE2 subfamily.

Its subcellular location is the cytoplasm. It catalyses the reaction DNA(n) + a 2'-deoxyribonucleoside 5'-triphosphate = DNA(n+1) + diphosphate. Functionally, DNA polymerase involved in damage-induced mutagenesis and translesion synthesis (TLS). It is not the major replicative DNA polymerase. The polypeptide is Error-prone DNA polymerase (Rhodopseudomonas palustris (strain HaA2)).